The primary structure comprises 378 residues: MSETIQLAQKLIQTESVTPNDNGCQTLIADYLKPLGFDIEPMPFGEVENLWARAGKDGPVIVFAGHTDVVPTGPEEKWTHPPFSAHIDADGIMYGRGTADMKSSIACFMVATKQFIKQYPDFKGSIAFLITSDEEGPAVNGTVKVIEALEARNEKFEYCLVGEPSSSNTLGDSIKNGRRGSLSGHLTIKGIQGHIAYPQLAENPIHTLSPALSDMVNKVWDKGNDYFPPTSFQVSNIHSGTGATNVIPGDCVVDFNFRFSTEQTPESLKAGIHQILDSHQLNYDLDWNLSGLPFITPADGELIQAVSKAIEQEMGTTPELSTGGGTSDGRFIAQTGAQVIELGPLNDTIHKIDERVSVSDLEKLTQIYRNTLINLLVT.

Histidine 66 contacts Zn(2+). Residue aspartate 68 is part of the active site. Zn(2+) is bound at residue aspartate 100. Glutamate 134 (proton acceptor) is an active-site residue. Residues glutamate 135, glutamate 163, and histidine 350 each contribute to the Zn(2+) site.

It belongs to the peptidase M20A family. DapE subfamily. Homodimer. Zn(2+) serves as cofactor. The cofactor is Co(2+).

The enzyme catalyses N-succinyl-(2S,6S)-2,6-diaminopimelate + H2O = (2S,6S)-2,6-diaminopimelate + succinate. Its pathway is amino-acid biosynthesis; L-lysine biosynthesis via DAP pathway; LL-2,6-diaminopimelate from (S)-tetrahydrodipicolinate (succinylase route): step 3/3. Catalyzes the hydrolysis of N-succinyl-L,L-diaminopimelic acid (SDAP), forming succinate and LL-2,6-diaminopimelate (DAP), an intermediate involved in the bacterial biosynthesis of lysine and meso-diaminopimelic acid, an essential component of bacterial cell walls. The protein is Succinyl-diaminopimelate desuccinylase of Hydrogenovibrio crunogenus (strain DSM 25203 / XCL-2) (Thiomicrospira crunogena).